Consider the following 62-residue polypeptide: uncharacterized protein (62 aa).

Positions 1–62 (MTSTQNLKDK…PPKKSLSQLP (62 aa)) are disordered. The segment covering 7 to 29 (LKDKFEEEIRQQKEGKGKKEKVW) has biased composition (basic and acidic residues). The span at 32–43 (HSDSSYNKQTAV) shows a compositional bias: polar residues.

This is an uncharacterized protein from Dictyostelium discoideum (Social amoeba).